The following is a 441-amino-acid chain: MAGUK p55 subfamily member 4 (441 aa).

The region spanning Met1–Ser84 is the PDZ domain. An SH3 domain is found at Gln91 to Gln161. Positions His232–Gln421 constitute a Guanylate kinase-like domain. Positions Val373–Val430 form a coiled coil.

This sequence belongs to the MAGUK family. As to quaternary structure, interacts with MPDZ. May interact with GRIA2. Forms a complex with CRB1 and PALS1. Interacts with FASLG. Highly expressed in brain and detected in lung, and bone (at protein level). Also expressed in intestine and spleen.

Its subcellular location is the cytoplasm. In terms of biological role, may play a role in retinal photoreceptors development. This chain is MAGUK p55 subfamily member 4 (Mpp4), found in Rattus norvegicus (Rat).